A 732-amino-acid chain; its full sequence is uncharacterized protein (732 aa).

The TR mART core domain occupies 163-390; sequence YYTINELNYL…FGIVAKKKYE (228 aa). Catalysis depends on residues arginine 285, serine 309, and glutamate 354.

This is an uncharacterized protein from Acanthamoeba polyphaga mimivirus (APMV).